A 330-amino-acid polypeptide reads, in one-letter code: Fructose-1,6-bisphosphatase class 1 (330 aa).

4 residues coordinate Mg(2+): E84, D103, L105, and D106. Substrate is bound by residues 106 to 109, N196, and K262; that span reads DGSS. Position 268 (E268) interacts with Mg(2+).

Belongs to the FBPase class 1 family. Homotetramer. The cofactor is Mg(2+).

Its subcellular location is the cytoplasm. It carries out the reaction beta-D-fructose 1,6-bisphosphate + H2O = beta-D-fructose 6-phosphate + phosphate. Its pathway is carbohydrate biosynthesis; gluconeogenesis. The chain is Fructose-1,6-bisphosphatase class 1 from Shewanella frigidimarina (strain NCIMB 400).